A 280-amino-acid polypeptide reads, in one-letter code: Ribonuclease P protein subunit p38 (280 aa).

A2 carries the post-translational modification N-acetylalanine. Phosphoserine occurs at positions 12, 221, and 230. The segment at 202–227 is disordered; the sequence is WLPDRTQGPTDSLETEPSESQDNEIL. Acidic residues predominate over residues 214-226; the sequence is LETEPSESQDNEI. A disordered region spans residues 254–280; sequence QPLKIKKLIPNPSKIRKPPKSKKSISK. Residues 267–280 are compositionally biased toward basic residues; sequence KIRKPPKSKKSISK.

The protein belongs to the eukaryotic ribosomal protein eL8 family. In terms of assembly, component of nuclear RNase P and RNase MRP ribonucleoproteins. RNase P consists of a catalytic RNA moiety and about 10 protein subunits; POP1, POP4, POP5, POP7, RPP14, RPP21, RPP25, RPP30, RPP38 and RPP40. Within the RNase P complex, POP1, POP7 and RPP25 form the 'finger' subcomplex, POP5, RPP14, RPP40 and homodimeric RPP30 form the 'palm' subcomplex, and RPP21, POP4 and RPP38 form the 'wrist' subcomplex. All subunits of the RNase P complex interact with the catalytic RNA. Several subunits of RNase P are also part of the RNase MRP complex. RNase MRP consists of a catalytic RNA moiety and about 8 protein subunits; POP1, POP7, RPP25, RPP30, RPP38, RPP40 and possibly also POP4 and POP5.

The protein resides in the nucleus. Its subcellular location is the nucleolus. Functionally, component of ribonuclease P, a ribonucleoprotein complex that generates mature tRNA molecules by cleaving their 5'-ends. Also a component of the MRP ribonuclease complex, which cleaves pre-rRNA sequences. The chain is Ribonuclease P protein subunit p38 (Rpp38) from Mus musculus (Mouse).